Consider the following 228-residue polypeptide: 5'-methylthioadenosine/S-adenosylhomocysteine nucleosidase (228 aa).

Glu11 (proton acceptor) is an active-site residue. Residues Gly77, Ile151, and 172-173 (ME) contribute to the substrate site. The Proton donor role is filled by Asp196.

The protein belongs to the PNP/UDP phosphorylase family. MtnN subfamily.

The enzyme catalyses S-adenosyl-L-homocysteine + H2O = S-(5-deoxy-D-ribos-5-yl)-L-homocysteine + adenine. The catalysed reaction is S-methyl-5'-thioadenosine + H2O = 5-(methylsulfanyl)-D-ribose + adenine. It carries out the reaction 5'-deoxyadenosine + H2O = 5-deoxy-D-ribose + adenine. Its pathway is amino-acid biosynthesis; L-methionine biosynthesis via salvage pathway; S-methyl-5-thio-alpha-D-ribose 1-phosphate from S-methyl-5'-thioadenosine (hydrolase route): step 1/2. Catalyzes the irreversible cleavage of the glycosidic bond in both 5'-methylthioadenosine (MTA) and S-adenosylhomocysteine (SAH/AdoHcy) to adenine and the corresponding thioribose, 5'-methylthioribose and S-ribosylhomocysteine, respectively. Also cleaves 5'-deoxyadenosine, a toxic by-product of radical S-adenosylmethionine (SAM) enzymes, into 5-deoxyribose and adenine. This Staphylococcus carnosus (strain TM300) protein is 5'-methylthioadenosine/S-adenosylhomocysteine nucleosidase.